We begin with the raw amino-acid sequence, 341 residues long: Phenylalanine--tRNA ligase alpha subunit (341 aa).

Glutamate 256 contacts Mg(2+).

Belongs to the class-II aminoacyl-tRNA synthetase family. Phe-tRNA synthetase alpha subunit type 1 subfamily. As to quaternary structure, tetramer of two alpha and two beta subunits. Mg(2+) is required as a cofactor.

It is found in the cytoplasm. It catalyses the reaction tRNA(Phe) + L-phenylalanine + ATP = L-phenylalanyl-tRNA(Phe) + AMP + diphosphate + H(+). The sequence is that of Phenylalanine--tRNA ligase alpha subunit from Chlamydia abortus (strain DSM 27085 / S26/3) (Chlamydophila abortus).